The primary structure comprises 295 residues: Guided entry of tail-anchored proteins factor CAMLG (295 aa).

2 disordered regions span residues 1 to 73 (MEPM…ILNP) and 127 to 148 (GVELRQRNRGDLTADSAPRGSH). Residues 1-188 (MEPMPSATDG…RTTEEFDSFR (188 aa)) lie on the Cytoplasmic side of the membrane. Residues 15-24 (ATPSGLSASQ) show a composition bias toward polar residues. At Ser53 the chain carries Phosphoserine. Over residues 127 to 138 (GVELRQRNRGDL) the composition is skewed to basic and acidic residues. Residues 189–206 (IFRLVGCALLALVVRAFV) traverse the membrane as a helical segment. The Lumenal segment spans residues 207–208 (CK). A disulfide bond links Cys207 and Cys283. The helical transmembrane segment at 209-227 (YLSIFAPFLTLQLAYMGLY) threads the bilayer. At 228–268 (KYFPKGEKKVKTTVLTAALLLSGIPAEVINRSMDTYSKMGE) the chain is on the cytoplasmic side. Residues 269-287 (VFTDLCVYFFTFIFCHEVL) form a helical membrane-spanning segment. Topologically, residues 288–295 (EYWGPEVP) are lumenal.

In terms of assembly, component of the Golgi to ER traffic (GET) complex, which is composed of GET1/WRB, CAMLG/GET2 and GET3/TRC40. Within the complex, GET1 and CAMLG form a heterotetramer which is stabilized by phosphatidylinositol binding and which binds to the GET3 homodimer. Interacts (via C-terminus) with GET1. Interacts (via N-terminus) with GET3. GET3 shows a higher affinity for CAMLG than for GET1. Interacts (via N-terminus) with TNFRSF13B/TACI (via C-terminus). As to expression, in the central nervous system, expressed in astrocytes, microglia and neurons (at protein level).

The protein localises to the endoplasmic reticulum membrane. Functionally, required for the post-translational delivery of tail-anchored (TA) proteins to the endoplasmic reticulum. Together with GET1/WRB, acts as a membrane receptor for soluble GET3/TRC40, which recognizes and selectively binds the transmembrane domain of TA proteins in the cytosol. Required for the stability of GET1. Stimulates calcium signaling in T cells through its involvement in elevation of intracellular calcium. Essential for the survival of peripheral follicular B cells. This is Guided entry of tail-anchored proteins factor CAMLG from Rattus norvegicus (Rat).